We begin with the raw amino-acid sequence, 636 residues long: Poly(3-hydroxyalkanoate) polymerase subunit PhaC (636 aa).

Disordered regions lie at residues 1-38 (MYNK…DATD) and 129-152 (QGTR…KRFS). Positions 143–152 (PDTRKDKRFS) are enriched in basic and acidic residues. Cys373 is an active-site residue.

This sequence belongs to the PHA/PHB synthase family. Type I PhaC subfamily.

It is found in the cytoplasm. It catalyses the reaction (3R)-3-hydroxybutanoyl-CoA + [(3R)-hydroxybutanoate](n) = [(3R)-hydroxybutanoate](n+1) + CoA. It functions in the pathway biopolymer metabolism; poly-(R)-3-hydroxybutanoate biosynthesis. Polymerizes D(-)-3-hydroxybutyryl-CoA to create PHB which consists of thousands of hydroxybutyrate molecules linked end to end. PHB serves as an intracellular energy reserve material when cells grow under conditions of nutrient limitation. The sequence is that of Poly(3-hydroxyalkanoate) polymerase subunit PhaC from Rhizobium etli (strain ATCC 51251 / DSM 11541 / JCM 21823 / NBRC 15573 / CFN 42).